A 364-amino-acid chain; its full sequence is Peroxisomal membrane protein PEX16 (364 aa).

The residue at position 200 (serine 200) is a Phosphoserine.

The protein belongs to the peroxin-16 family.

The protein resides in the peroxisome membrane. Its function is as follows. Involved in the biogenesis of peroxisomes. This Schizosaccharomyces pombe (strain 972 / ATCC 24843) (Fission yeast) protein is Peroxisomal membrane protein PEX16 (pex16).